Consider the following 409-residue polypeptide: Patellin-6 (409 aa).

Positions 116-294 constitute a CRAL-TRIO domain; sequence EKLTEEDLGF…QYGGLSRPTD (179 aa). A GOLD domain is found at 270–404; it reads AETLYKFIRP…VAAYRYTVRK (135 aa).

Belongs to the patellin family.

It is found in the membrane. Its subcellular location is the cytoplasm. In terms of biological role, carrier protein that may be involved in membrane-trafficking events associated with cell-plate formation during cytokinesis. Binds to some hydrophobic molecules such as phosphoinositides and promotes their transfer between the different cellular sites. This is Patellin-6 (PATL6) from Arabidopsis thaliana (Mouse-ear cress).